Reading from the N-terminus, the 513-residue chain is Na(+)/H(+) antiporter NhaB (513 aa).

9 consecutive transmembrane segments (helical) span residues 21–41 (ICII…SPFV), 88–108 (IMAN…IYFM), 119–139 (LLIV…SATF), 243–263 (LPVS…LEHF), 299–318 (MGIQ…LHLA), 322–344 (IIGL…HAIG), 350–370 (PMPF…IVDL), 389–409 (LALF…VFVG), and 477–497 (MALP…EFLL).

This sequence belongs to the NhaB Na(+)/H(+) (TC 2.A.34) antiporter family.

Its subcellular location is the cell inner membrane. It catalyses the reaction 2 Na(+)(in) + 3 H(+)(out) = 2 Na(+)(out) + 3 H(+)(in). In terms of biological role, na(+)/H(+) antiporter that extrudes sodium in exchange for external protons. The sequence is that of Na(+)/H(+) antiporter NhaB from Actinobacillus pleuropneumoniae serotype 5b (strain L20).